Reading from the N-terminus, the 63-residue chain is Large ribosomal subunit protein bL28 (63 aa).

The protein belongs to the bacterial ribosomal protein bL28 family.

The sequence is that of Large ribosomal subunit protein bL28 from Solibacter usitatus (strain Ellin6076).